The following is a 759-amino-acid chain: MNFEEIEERDGVRFTWNVFPSTRIESSRTIVPIASIYKPLNERPDLPPVLYEPVTCKAPCKAVLNPYCHIDTRAKFWICPFCLQRNMLPPQYKDISNTSLPIELLPEYSTIEYTLPRPPQLTPVFLFVVDVCQDEENLQALKDSLIISLSLLPPECLVGLVTFGTMVDVYELGYTECSKSYVFRGSKDYTSKQIQEMLGLPTSNVSPVALQQARSFQGSAAPSRFLLPIQQCEFQLTNILEQLQPDSWPVANDRRPQRCTGTALNISVSMMESVCPNSGGHIMLFAGGPSTVGPGTVVSTELREPIRSHHDIERDQAKHVKKALRFYEGLTKRVSANGHAVDILAGCLDQIGIMEMKSLASSTGGYLVLSDSFTTSIFKQSFQRIFGRDSLNNMLLGFNATMEVLTTKELKISGLIGHAVSLNKKSQNVGDIEIGLGNTNSWKMCGISPKSTYAIYFEVATQSASAPQGDSRGLVQYLTLYQHSSNTFRLRVTTVARAFADGGSPLIVNSFDQEAAAVAMARIAAFKAEVDDGPDVLRWTDRMLIKLCQKFAEYRKDDPSSFRLSSQFTLYPQFMYYLRRSPFLQVFNNSPDETAFYRHMLNHEDVNNSLIMIQPTLQSFSFEHPGGVPVLLDAVSVKPDVILLLDTFFHILIFHGDTIAQWRNAGYQNQPEYQNLKELLEAPRVEAAELLIDRFPIPRFIVCDQGGSQARFLLSRLNPSETHNTTSMYGAPPAHAILTDDVSLQTFMSHLKKLAVAVS.

Zn(2+)-binding residues include cysteine 56, cysteine 60, cysteine 79, and cysteine 82.

Belongs to the SEC23/SEC24 family. SEC23 subfamily. In terms of assembly, the COPII coat is composed of at least 5 proteins: the sec23/24 complex, the sec13/31 complex, and the protein sar1.

It is found in the cytoplasm. Its subcellular location is the cytoplasmic vesicle. The protein localises to the COPII-coated vesicle membrane. It localises to the endoplasmic reticulum membrane. The protein resides in the golgi apparatus membrane. Component of the coat protein complex II (COPII) which promotes the formation of transport vesicles from the endoplasmic reticulum (ER). The coat has two main functions, the physical deformation of the endoplasmic reticulum membrane into vesicles and the selection of cargo molecules. This chain is Protein transport protein sec23-1 (sec231), found in Schizosaccharomyces pombe (strain 972 / ATCC 24843) (Fission yeast).